A 660-amino-acid polypeptide reads, in one-letter code: Threonine--tRNA ligase (660 aa).

Residues Met1 to Tyr49 enclose the TGS domain. Positions Asp225–Pro554 are catalytic. Zn(2+) contacts are provided by Cys318, His369, and His531.

Belongs to the class-II aminoacyl-tRNA synthetase family. Homodimer. Zn(2+) serves as cofactor.

It localises to the cytoplasm. It catalyses the reaction tRNA(Thr) + L-threonine + ATP = L-threonyl-tRNA(Thr) + AMP + diphosphate + H(+). Catalyzes the attachment of threonine to tRNA(Thr) in a two-step reaction: L-threonine is first activated by ATP to form Thr-AMP and then transferred to the acceptor end of tRNA(Thr). This chain is Threonine--tRNA ligase, found in Thermoplasma volcanium (strain ATCC 51530 / DSM 4299 / JCM 9571 / NBRC 15438 / GSS1).